The following is a 346-amino-acid chain: Putative serine/threonine-protein kinase K06H7.1 (346 aa).

A Protein kinase domain is found at 20 to 287 (YKVVQKLGEG…KLFKLLEDVM (268 aa)). ATP contacts are provided by residues 26–34 (LGEGGCGSV) and Lys-50. Asp-141 serves as the catalytic Proton acceptor. A disordered region spans residues 302–326 (PEKKKNPASQGNKFGLGKKGTKESG).

This sequence belongs to the protein kinase superfamily. Ser/Thr protein kinase family.

It catalyses the reaction L-seryl-[protein] + ATP = O-phospho-L-seryl-[protein] + ADP + H(+). The catalysed reaction is L-threonyl-[protein] + ATP = O-phospho-L-threonyl-[protein] + ADP + H(+). The polypeptide is Putative serine/threonine-protein kinase K06H7.1 (Caenorhabditis elegans).